We begin with the raw amino-acid sequence, 112 residues long: Large ribosomal subunit protein eL33y (112 aa).

It belongs to the eukaryotic ribosomal protein eL33 family.

This is Large ribosomal subunit protein eL33y (RPL35AC) from Arabidopsis thaliana (Mouse-ear cress).